A 283-amino-acid chain; its full sequence is Malonyl-[acyl-carrier protein] O-methyltransferase (283 aa).

The protein belongs to the methyltransferase superfamily.

It catalyses the reaction malonyl-[ACP] + S-adenosyl-L-methionine = malonyl-[ACP] methyl ester + S-adenosyl-L-homocysteine. It participates in cofactor biosynthesis; biotin biosynthesis. In terms of biological role, converts the free carboxyl group of a malonyl-thioester to its methyl ester by transfer of a methyl group from S-adenosyl-L-methionine (SAM). It allows to synthesize pimeloyl-ACP via the fatty acid synthetic pathway. This is Malonyl-[acyl-carrier protein] O-methyltransferase from Acetivibrio thermocellus (strain ATCC 27405 / DSM 1237 / JCM 9322 / NBRC 103400 / NCIMB 10682 / NRRL B-4536 / VPI 7372) (Clostridium thermocellum).